Consider the following 116-residue polypeptide: Ribosome-binding factor A (116 aa).

Belongs to the RbfA family. As to quaternary structure, monomer. Binds 30S ribosomal subunits, but not 50S ribosomal subunits or 70S ribosomes.

Its subcellular location is the cytoplasm. Its function is as follows. One of several proteins that assist in the late maturation steps of the functional core of the 30S ribosomal subunit. Associates with free 30S ribosomal subunits (but not with 30S subunits that are part of 70S ribosomes or polysomes). Required for efficient processing of 16S rRNA. May interact with the 5'-terminal helix region of 16S rRNA. The chain is Ribosome-binding factor A from Streptococcus pneumoniae serotype 4 (strain ATCC BAA-334 / TIGR4).